A 337-amino-acid polypeptide reads, in one-letter code: GDP-fucose transporter, Golgi (337 aa).

The next 8 helical transmembrane spans lie at 13–35 (NKYL…TVFV), 45–67 (VNLG…ICFV), 95–117 (ILPL…SYVT), 121–140 (YYIG…YVIL), 145–163 (SFKC…WLGV), 173–192 (SWRG…MFSI), 205–227 (VWLL…IIIN), and 242–264 (SWFW…VTAL).

Belongs to the TPT transporter family. SLC35C subfamily.

Its subcellular location is the golgi apparatus membrane. In terms of biological role, involved in GDP-fucose import from the cytoplasm into the Golgi lumen. Plays a major role in the fucosylation of N-glycans. Functions redundantly with Efr in the O-fucosylation of Notch, positively regulating Notch signaling. This is GDP-fucose transporter, Golgi from Drosophila melanogaster (Fruit fly).